The chain runs to 217 residues: MOB kinase activator 3A (217 aa).

The Zn(2+) site is built by cysteine 83, cysteine 88, histidine 165, and histidine 170.

The protein belongs to the MOB1/phocein family.

May regulate the activity of kinases. This is MOB kinase activator 3A (Mob3a) from Mus musculus (Mouse).